The primary structure comprises 480 residues: ATP synthase subunit beta 1 (480 aa).

Residue 154 to 161 coordinates ATP; it reads GGAGVGKT.

The protein belongs to the ATPase alpha/beta chains family. In terms of assembly, F-type ATPases have 2 components, CF(1) - the catalytic core - and CF(0) - the membrane proton channel. CF(1) has five subunits: alpha(3), beta(3), gamma(1), delta(1), epsilon(1). CF(0) has four main subunits: a(1), b(1), b'(1) and c(9-12).

The protein localises to the cell inner membrane. The catalysed reaction is ATP + H2O + 4 H(+)(in) = ADP + phosphate + 5 H(+)(out). Produces ATP from ADP in the presence of a proton gradient across the membrane. The catalytic sites are hosted primarily by the beta subunits. The sequence is that of ATP synthase subunit beta 1 from Bradyrhizobium sp. (strain BTAi1 / ATCC BAA-1182).